The primary structure comprises 425 residues: Serine--tRNA ligase (425 aa).

L-serine is bound at residue 230-232 (TAE). 261–263 (RSE) is a binding site for ATP. Glutamate 284 contacts L-serine. 348-351 (EISS) lines the ATP pocket. Serine 384 lines the L-serine pocket.

This sequence belongs to the class-II aminoacyl-tRNA synthetase family. Type-1 seryl-tRNA synthetase subfamily. As to quaternary structure, homodimer. The tRNA molecule binds across the dimer.

It localises to the cytoplasm. The enzyme catalyses tRNA(Ser) + L-serine + ATP = L-seryl-tRNA(Ser) + AMP + diphosphate + H(+). It catalyses the reaction tRNA(Sec) + L-serine + ATP = L-seryl-tRNA(Sec) + AMP + diphosphate + H(+). It participates in aminoacyl-tRNA biosynthesis; selenocysteinyl-tRNA(Sec) biosynthesis; L-seryl-tRNA(Sec) from L-serine and tRNA(Sec): step 1/1. Its function is as follows. Catalyzes the attachment of serine to tRNA(Ser). Is also able to aminoacylate tRNA(Sec) with serine, to form the misacylated tRNA L-seryl-tRNA(Sec), which will be further converted into selenocysteinyl-tRNA(Sec). The sequence is that of Serine--tRNA ligase from Streptococcus sanguinis (strain SK36).